Reading from the N-terminus, the 157-residue chain is Succinate dehydrogenase [ubiquinone] cytochrome b small subunit, mitochondrial (157 aa).

A mitochondrion-targeting transit peptide spans 1–45; it reads MAALVLLRAGLARPRGVPTALLRGTLLRHSAVLTAAADRSAPARQ. At 46 to 61 the chain is on the mitochondrial matrix side; the sequence is SHGGAPQGHGSSKAAS. Residues 62-83 form a helical membrane-spanning segment; it reads LHWTSERAVSALLLGLLPAAYL. The Mitochondrial intermembrane portion of the chain corresponds to 84–88; the sequence is YPGPA. The chain crosses the membrane as a helical span at residues 89 to 109; the sequence is VDYSLAAALTLHGHWGLGQVI. H100 is a binding site for heme b. Topologically, residues 110–118 are mitochondrial matrix; that stretch reads TDYVHGDTP. Y112 is an a ubiquinone binding site. Residues 119 to 140 form a helical membrane-spanning segment; that stretch reads IKVANTGLYVLSAITFTGLCYF. Residues 141 to 157 are Mitochondrial intermembrane-facing; the sequence is NYYDVGICKAVAMLWSI.

Belongs to the CybS family. In terms of assembly, component of complex II composed of four subunits: the flavoprotein (FP) SDHA, iron-sulfur protein (IP) SDHB, and a cytochrome b560 composed of SDHC and SDHD.

The protein localises to the mitochondrion inner membrane. It functions in the pathway carbohydrate metabolism; tricarboxylic acid cycle. Functionally, membrane-anchoring subunit of succinate dehydrogenase (SDH) that is involved in complex II of the mitochondrial electron transport chain and is responsible for transferring electrons from succinate to ubiquinone (coenzyme Q). SDH also oxidizes malate to the non-canonical enol form of oxaloacetate, enol-oxaloacetate. Enol-oxaloacetate, which is a potent inhibitor of the succinate dehydrogenase activity, is further isomerized into keto-oxaloacetate. The protein is Succinate dehydrogenase [ubiquinone] cytochrome b small subunit, mitochondrial (SDHD) of Gallus gallus (Chicken).